The sequence spans 333 residues: Nucleoid-associated protein VV1_3120 (333 aa).

It belongs to the YejK family.

The protein localises to the cytoplasm. Its subcellular location is the nucleoid. In Vibrio vulnificus (strain CMCP6), this protein is Nucleoid-associated protein VV1_3120.